The sequence spans 648 residues: PAN2-PAN3 deadenylation complex subunit PAN3 (648 aa).

Residues 1-24 form a disordered region; sequence MAATRYPPNDLRRQVGSPRSKGRE. The segment at 24–53 adopts a C3H1-type zinc-finger fold; sequence ENKDTLCRNILIYGNCRYEDQGCTFNHDQN. The segment at 244–506 is pseudokinase domain; sequence QVMPNSGLPQ…SIENFISGIA (263 aa). ATP contacts are provided by residues arginine 295, 345–352, and 404–405; these read DYHPLSKT and SK. Residues 507 to 545 adopt a coiled-coil conformation; sequence THMTAFFDLALQDGDEKQFHLARELENGRIARSMMKLMT. The tract at residues 546-648 is knob domain; it reads IIERAEPGGA…SKTGAPGANN (103 aa).

This sequence belongs to the protein kinase superfamily. PAN3 family. In terms of assembly, homodimer. Forms a heterotrimer with a catalytic subunit PAN2 to form the poly(A)-nuclease (PAN) deadenylation complex. Interacts (via PAM-2 motif) with poly(A)-binding protein PAB1 (via PABC domain), conferring substrate specificity of the enzyme complex.

It is found in the cytoplasm. In terms of biological role, regulatory subunit of the poly(A)-nuclease (PAN) deadenylation complex, one of two cytoplasmic mRNA deadenylases involved in mRNA turnover. PAN specifically shortens poly(A) tails of RNA and the activity is stimulated by poly(A)-binding protein PAB1. PAN deadenylation is followed by rapid degradation of the shortened mRNA tails by the CCR4-NOT complex. Deadenylated mRNAs are then degraded by two alternative mechanisms, namely exosome-mediated 3'-5' exonucleolytic degradation, or deadenylation-dependent mRNA decaping and subsequent 5'-3' exonucleolytic degradation by XRN1. May also be involved in post-transcriptional maturation of mRNA poly(A) tails. PAN3 acts as a positive regulator for PAN activity, recruiting the catalytic subunit PAN2 to mRNA via its interaction with RNA and with PAB1. The polypeptide is PAN2-PAN3 deadenylation complex subunit PAN3 (Chaetomium globosum (strain ATCC 6205 / CBS 148.51 / DSM 1962 / NBRC 6347 / NRRL 1970) (Soil fungus)).